Here is a 179-residue protein sequence, read N- to C-terminus: 5'-deoxynucleotidase VV1_0013 (179 aa).

Position 53 (His53) interacts with a divalent metal cation. Residues 62–65 and Asp122 each bind substrate; that span reads DLPT. Position 122 (Asp122) interacts with a divalent metal cation.

The protein belongs to the 5DNU family. Homodimer. A divalent metal cation is required as a cofactor.

The protein localises to the cytoplasm. It carries out the reaction a 2'-deoxyribonucleoside 5'-phosphate + H2O = a 2'-deoxyribonucleoside + phosphate. In terms of biological role, catalyzes the strictly specific dephosphorylation of 2'-deoxyribonucleoside 5'-monophosphates. The sequence is that of 5'-deoxynucleotidase VV1_0013 from Vibrio vulnificus (strain CMCP6).